A 275-amino-acid chain; its full sequence is COP9 signalosome complex subunit 7a (275 aa).

N-acetylserine is present on Ser-2. Positions 2–159 (SAEVKVTGQN…QRLEVDYSIG (158 aa)) constitute a PCI domain. Residues 185-233 (LSGIEEQVSRANQHKEQQLGLKQQIESEVANLKKTIKVTTAAAAAATSQ) are a coiled coil. A disordered region spans residues 227 to 275 (AAAATSQDPEQHLTELREPAPGTNQRQPSKKASKGKGLRGSAKIWSKSN). The segment covering 235-244 (PEQHLTELRE) has biased composition (basic and acidic residues). Residues 254-263 (PSKKASKGKG) are compositionally biased toward basic residues.

Belongs to the CSN7/EIF3M family. CSN7 subfamily. In terms of assembly, component of the CSN complex, composed of COPS1/GPS1, COPS2, COPS3, COPS4, COPS5, COPS6, COPS7 (COPS7A or COPS7B), COPS8 and COPS9. In the complex, it probably interacts directly with COPS1, COPS2, COPS4, COPS5, COPS6 and COPS8. Interacts with PMF1. Interacts with the translation initiation factor EIF3S6. Interacts with CK2 and PKD. Interacts directly with ID3. In terms of processing, phosphorylated by CK2 and PKD kinases.

The protein resides in the cytoplasm. It is found in the nucleus. Its function is as follows. Component of the COP9 signalosome complex (CSN), a complex involved in various cellular and developmental processes. The CSN complex is an essential regulator of the ubiquitin (Ubl) conjugation pathway by mediating the deneddylation of the cullin subunits of SCF-type E3 ligase complexes, leading to decrease the Ubl ligase activity of SCF-type complexes such as SCF, CSA or DDB2. The complex is also involved in phosphorylation of p53/TP53, JUN, I-kappa-B-alpha/NFKBIA, ITPK1 and IRF8/ICSBP, possibly via its association with CK2 and PKD kinases. CSN-dependent phosphorylation of TP53 and JUN promotes and protects degradation by the Ubl system, respectively. In Pongo abelii (Sumatran orangutan), this protein is COP9 signalosome complex subunit 7a (COPS7A).